The chain runs to 482 residues: tRNA sulfurtransferase (482 aa).

The THUMP domain maps to 61-165 (PVIADALTRI…NDKLMLVKAR (105 aa)). ATP-binding positions include 183–184 (LI), Lys-265, Gly-287, and Gln-296. Cys-344 and Cys-456 are joined by a disulfide. The Rhodanese domain maps to 404 to 482 (FDADQVILDI…GFTNVKVYRP (79 aa)). Cys-456 serves as the catalytic Cysteine persulfide intermediate.

Belongs to the ThiI family.

The protein localises to the cytoplasm. The enzyme catalyses [ThiI sulfur-carrier protein]-S-sulfanyl-L-cysteine + a uridine in tRNA + 2 reduced [2Fe-2S]-[ferredoxin] + ATP + H(+) = [ThiI sulfur-carrier protein]-L-cysteine + a 4-thiouridine in tRNA + 2 oxidized [2Fe-2S]-[ferredoxin] + AMP + diphosphate. It catalyses the reaction [ThiS sulfur-carrier protein]-C-terminal Gly-Gly-AMP + S-sulfanyl-L-cysteinyl-[cysteine desulfurase] + AH2 = [ThiS sulfur-carrier protein]-C-terminal-Gly-aminoethanethioate + L-cysteinyl-[cysteine desulfurase] + A + AMP + 2 H(+). Its pathway is cofactor biosynthesis; thiamine diphosphate biosynthesis. Functionally, catalyzes the ATP-dependent transfer of a sulfur to tRNA to produce 4-thiouridine in position 8 of tRNAs, which functions as a near-UV photosensor. Also catalyzes the transfer of sulfur to the sulfur carrier protein ThiS, forming ThiS-thiocarboxylate. This is a step in the synthesis of thiazole, in the thiamine biosynthesis pathway. The sulfur is donated as persulfide by IscS. This chain is tRNA sulfurtransferase, found in Serratia proteamaculans (strain 568).